We begin with the raw amino-acid sequence, 212 residues long: Ribosomal RNA small subunit methyltransferase G (212 aa).

S-adenosyl-L-methionine contacts are provided by residues G80, L85, 131-132, and R146; that span reads AE.

Belongs to the methyltransferase superfamily. RNA methyltransferase RsmG family.

It is found in the cytoplasm. It carries out the reaction guanosine(527) in 16S rRNA + S-adenosyl-L-methionine = N(7)-methylguanosine(527) in 16S rRNA + S-adenosyl-L-homocysteine. Specifically methylates the N7 position of guanine in position 527 of 16S rRNA. This chain is Ribosomal RNA small subunit methyltransferase G, found in Xylella fastidiosa (strain 9a5c).